A 259-amino-acid polypeptide reads, in one-letter code: MPRFALKVEYHGKPFAGWQRQKDQPSVQGAIEAALARIEPGEHTIAAAGRTDTGVHGLGQVAHCDLEKNWDPFRLSEALNYHLKPAPVAIVDAALVDDEWHARFSAVERQYLFRILMRRAPATHDEGQVWQIKHDLDVAAMQAGANMLLGNHDFTTFRSSICQAASPVKTLDELRVERVQGLSGPEVHFHVRARSFLHNQVRSFVGTLERVGTGAWSPEDVKHALEAKDRAACGPVCPGHGLYLARVGYPDPVFSSDRV.

Asp52 functions as the Nucleophile in the catalytic mechanism. Tyr111 contributes to the substrate binding site.

Belongs to the tRNA pseudouridine synthase TruA family. In terms of assembly, homodimer.

The enzyme catalyses uridine(38/39/40) in tRNA = pseudouridine(38/39/40) in tRNA. In terms of biological role, formation of pseudouridine at positions 38, 39 and 40 in the anticodon stem and loop of transfer RNAs. This Ruegeria sp. (strain TM1040) (Silicibacter sp.) protein is tRNA pseudouridine synthase A.